The primary structure comprises 198 residues: Dephospho-CoA kinase (198 aa).

Residues leucine 3–glycine 198 enclose the DPCK domain. Alanine 11–threonine 16 lines the ATP pocket.

It belongs to the CoaE family.

Its subcellular location is the cytoplasm. The catalysed reaction is 3'-dephospho-CoA + ATP = ADP + CoA + H(+). It functions in the pathway cofactor biosynthesis; coenzyme A biosynthesis; CoA from (R)-pantothenate: step 5/5. Its function is as follows. Catalyzes the phosphorylation of the 3'-hydroxyl group of dephosphocoenzyme A to form coenzyme A. The polypeptide is Dephospho-CoA kinase (Leifsonia xyli subsp. xyli (strain CTCB07)).